A 338-amino-acid polypeptide reads, in one-letter code: Phenylalanine--tRNA ligase alpha subunit (338 aa).

Position 253 (Glu253) interacts with Mg(2+).

The protein belongs to the class-II aminoacyl-tRNA synthetase family. Phe-tRNA synthetase alpha subunit type 1 subfamily. Tetramer of two alpha and two beta subunits. Mg(2+) serves as cofactor.

The protein localises to the cytoplasm. The catalysed reaction is tRNA(Phe) + L-phenylalanine + ATP = L-phenylalanyl-tRNA(Phe) + AMP + diphosphate + H(+). The chain is Phenylalanine--tRNA ligase alpha subunit from Geobacter sp. (strain M21).